A 377-amino-acid polypeptide reads, in one-letter code: MKPFSPELLVLSFILLVLSCAIRPAKGRWILWVIIVALNTYLTMTTTGDSTLDYDIANNLFVITLTATDYILLTDVQRELQFRNQKGVEQASLLERIKWATWLVQSRRGVGWNWEPKIFVHRFSPKTSRLSFLLQQLVTGARHYLICDLVSLYSRSPVAFAEPLASRPLIWRCADIAAWLLFTTNQVSILLTALSLMQVLSGYSEPQDWVPVFGRWRDAYTVRRFWGRSWHQLVRRCLSSPGKYLSTKVLGLKPGSNPALYVQLYAAFFLSGVLHAIGDFKVHEDWYKAGTMEFFCVQAVIIQMEDGVLWVGRKLGIKETWYWRALGHLWTVAWFVYSCPNWLGATISGRGKASMALESSLVLGLYRGEWHPPRVAQ.

A signal peptide spans 1–27; it reads MKPFSPELLVLSFILLVLSCAIRPAKG. 4 consecutive transmembrane segments (helical) span residues 29 to 49, 56 to 76, 176 to 196, and 258 to 278; these read WILW…TTGD, IANN…LTDV, IAAW…ALSL, and PALY…HAIG.

It belongs to the wax synthase family.

Its subcellular location is the membrane. It functions in the pathway secondary metabolite biosynthesis; terpenoid biosynthesis. Functionally, acetyltransferase; part of the gene cluster that mediates the biosynthesis of pleuromutilin, a tricyclic diterpene showing antibacterial properties. The geranylgeranyl diphosphate (GGPP) synthase ple4 catalyzes the first step in pleuromutilin biosynthesis. GGPP is then substrate of the premutilin synthase (PS) ple3 to yield premutilin. Premutilin synthase is a bifunctional enzyme composed of the fusion of a class II diterpene cyclase (DTC) and a class I diterpene synthase (DTS), with the corresponding domains and active sites containing characteristic aspartate-rich motifs. GGPP is first converted to mutildienyl-diphosphate (MPP) at the class II DTC site. MPP is subsequently further cyclized at the class I DTS site, followed by a 1,5-hydride shift and addition of water prior to terminating deprotonation, to yield premutilin. The cytochrome P450 monooxygenases ple5 and ple6 hydroxylate premutilin at C-11 and C-3, respectively, producing 11-hydroxypremutilin and 3-hydroxypremutilin. The combination of the actions of both ple5 and ple6 leads to the production of 3,11-dihydroxypremutilin. The short chain dehydrogenase ple7 further converts 3,11-dihydroxypremutilin into mutilin. The acetyltransferase ple2 then acetylates mutilin to produce 14-O-acetylmutilin. Finally, the cytochrome P450 monooxygenase ple1 catalyzes hydroxylation on the alpha position of the acetyl side chain of 14-O-acetylmutilin to yield pleuromutilin. The sequence is that of Acetyltransferase ple2 from Rhodocybe pseudopiperita (Clitopilus pseudopiperitus).